The sequence spans 366 residues: Anhydro-N-acetylmuramic acid kinase (366 aa).

Residue 10 to 17 (GTSMDGID) participates in ATP binding.

It belongs to the anhydro-N-acetylmuramic acid kinase family.

The catalysed reaction is 1,6-anhydro-N-acetyl-beta-muramate + ATP + H2O = N-acetyl-D-muramate 6-phosphate + ADP + H(+). It functions in the pathway amino-sugar metabolism; 1,6-anhydro-N-acetylmuramate degradation. The protein operates within cell wall biogenesis; peptidoglycan recycling. Its function is as follows. Catalyzes the specific phosphorylation of 1,6-anhydro-N-acetylmuramic acid (anhMurNAc) with the simultaneous cleavage of the 1,6-anhydro ring, generating MurNAc-6-P. Is required for the utilization of anhMurNAc either imported from the medium or derived from its own cell wall murein, and thus plays a role in cell wall recycling. The chain is Anhydro-N-acetylmuramic acid kinase from Legionella pneumophila (strain Corby).